The chain runs to 172 residues: Shikimate kinase (172 aa).

11–16 (GAGKST) provides a ligand contact to ATP. Serine 15 contributes to the Mg(2+) binding site. Substrate-binding residues include aspartate 33, arginine 57, and glycine 79. Arginine 117 is an ATP binding site. Arginine 136 is a substrate binding site. Arginine 153 is a binding site for ATP.

Belongs to the shikimate kinase family. In terms of assembly, monomer. The cofactor is Mg(2+).

Its subcellular location is the cytoplasm. The enzyme catalyses shikimate + ATP = 3-phosphoshikimate + ADP + H(+). It functions in the pathway metabolic intermediate biosynthesis; chorismate biosynthesis; chorismate from D-erythrose 4-phosphate and phosphoenolpyruvate: step 5/7. Catalyzes the specific phosphorylation of the 3-hydroxyl group of shikimic acid using ATP as a cosubstrate. This is Shikimate kinase from Pseudomonas aeruginosa (strain LESB58).